The chain runs to 168 residues: Protein GrpE (168 aa).

Belongs to the GrpE family. Homodimer.

It localises to the cytoplasm. Functionally, participates actively in the response to hyperosmotic and heat shock by preventing the aggregation of stress-denatured proteins, in association with DnaK and GrpE. It is the nucleotide exchange factor for DnaK and may function as a thermosensor. Unfolded proteins bind initially to DnaJ; upon interaction with the DnaJ-bound protein, DnaK hydrolyzes its bound ATP, resulting in the formation of a stable complex. GrpE releases ADP from DnaK; ATP binding to DnaK triggers the release of the substrate protein, thus completing the reaction cycle. Several rounds of ATP-dependent interactions between DnaJ, DnaK and GrpE are required for fully efficient folding. This chain is Protein GrpE, found in Thermotoga neapolitana (strain ATCC 49049 / DSM 4359 / NBRC 107923 / NS-E).